The sequence spans 393 residues: Protein TsgA (393 aa).

The next 12 membrane-spanning stretches (helical) occupy residues Trp-11–Met-31, Phe-51–Pro-71, Phe-78–Leu-98, Ala-101–Val-121, Leu-134–Phe-154, Trp-162–Gly-182, Ile-206–Ile-226, Thr-245–Leu-265, Ile-273–Pro-293, Ala-297–Leu-317, Phe-332–Val-352, and Leu-361–Val-381.

The protein belongs to the major facilitator superfamily. TsgA family.

The protein resides in the cell inner membrane. In Escherichia coli O6:K15:H31 (strain 536 / UPEC), this protein is Protein TsgA.